An 857-amino-acid chain; its full sequence is Linoleate 9S-lipoxygenase 6 (857 aa).

A PLAT domain is found at 26 to 156; the sequence is NALDFTDLAG…RYKSDRIFFA (131 aa). A Lipoxygenase domain is found at 159-857; that stretch reads PYLPSETPEL…GKGIPNSVSI (699 aa). The segment at 205–243 is disordered; the sequence is NPDQGEQNVRTTLGGSADYPYPRRGRTGRPPTRTDPKSE. Residues 208-218 are compositionally biased toward polar residues; sequence QGEQNVRTTLG. Fe cation is bound by residues His-518, His-523, His-709, Asn-713, and Ile-857.

The protein belongs to the lipoxygenase family. Monomer. Fe cation serves as cofactor. Expressed in tubers and roots. Detected in leaves, petioles and stems.

It is found in the cytoplasm. The catalysed reaction is (9Z,12Z)-octadecadienoate + O2 = (9S)-hydroperoxy-(10E,12Z)-octadecadienoate. It participates in lipid metabolism; oxylipin biosynthesis. Plant lipoxygenases may be involved in a number of diverse aspects of plant physiology including growth and development, pest resistance, and senescence or responses to wounding. Catalyzes the hydroperoxidation of lipids containing a cis,cis-1,4-pentadiene structure. Linoleic and linolenic acids are the preferred substrates, but is also active with arachidonic acid. The products are almost exclusively the S enantiomers. This chain is Linoleate 9S-lipoxygenase 6 (LOX1.6), found in Solanum tuberosum (Potato).